The primary structure comprises 225 residues: Chromosome partition protein MukE (225 aa).

The tract at residues 197–225 is disordered; it reads RDGEAMPIENHLQLNDETEENQPDSGEEE. Over residues 212-225 the composition is skewed to acidic residues; that stretch reads DETEENQPDSGEEE.

It belongs to the MukE family. Interacts, and probably forms a ternary complex, with MukF and MukB. The complex formation is stimulated by calcium or magnesium.

It is found in the cytoplasm. The protein localises to the nucleoid. Its function is as follows. Involved in chromosome condensation, segregation and cell cycle progression. May participate in facilitating chromosome segregation by condensation DNA from both sides of a centrally located replisome during cell division. Probably acts via its interaction with MukB and MukF. The polypeptide is Chromosome partition protein MukE (Escherichia coli O157:H7).